Consider the following 350-residue polypeptide: Phosphotriesterase-related protein (350 aa).

Residues histidine 22, histidine 24, glutamate 169, histidine 201, histidine 230, and aspartate 298 each contribute to the a divalent metal cation site.

Belongs to the metallo-dependent hydrolases superfamily. Phosphotriesterase family. Requires a divalent metal cation as cofactor.

In Drosophila pseudoobscura pseudoobscura (Fruit fly), this protein is Phosphotriesterase-related protein.